Reading from the N-terminus, the 156-residue chain is MNLNATIFFQMLVFFVLGWFTMKFVWPPLTKAMDERRQKIADGLAAAEKGKADLAQAQARVSLIEASAKSENHARIIEAEKQAASLIEQARREAEAERARIVAQAAQDAAQEVQRARDALRDDVAALAVKGAEQILKREVDARAHAELLNQLKAQL.

Residues 7–27 (IFFQMLVFFVLGWFTMKFVWP) traverse the membrane as a helical segment.

This sequence belongs to the ATPase B chain family. In terms of assembly, F-type ATPases have 2 components, F(1) - the catalytic core - and F(0) - the membrane proton channel. F(1) has five subunits: alpha(3), beta(3), gamma(1), delta(1), epsilon(1). F(0) has three main subunits: a(1), b(2) and c(10-14). The alpha and beta chains form an alternating ring which encloses part of the gamma chain. F(1) is attached to F(0) by a central stalk formed by the gamma and epsilon chains, while a peripheral stalk is formed by the delta and b chains.

The protein resides in the cell inner membrane. F(1)F(0) ATP synthase produces ATP from ADP in the presence of a proton or sodium gradient. F-type ATPases consist of two structural domains, F(1) containing the extramembraneous catalytic core and F(0) containing the membrane proton channel, linked together by a central stalk and a peripheral stalk. During catalysis, ATP synthesis in the catalytic domain of F(1) is coupled via a rotary mechanism of the central stalk subunits to proton translocation. Its function is as follows. Component of the F(0) channel, it forms part of the peripheral stalk, linking F(1) to F(0). The protein is ATP synthase subunit b of Bordetella petrii (strain ATCC BAA-461 / DSM 12804 / CCUG 43448).